The sequence spans 370 residues: Putative alanine racemase 2 (370 aa).

Residue Lys-38 is the Proton acceptor; specific for D-alanine of the active site. An N6-(pyridoxal phosphate)lysine modification is found at Lys-38. The Proton acceptor; specific for L-alanine role is filled by Tyr-266.

The protein belongs to the alanine racemase family. The cofactor is pyridoxal 5'-phosphate.

The enzyme catalyses L-alanine = D-alanine. This is Putative alanine racemase 2 (alr2) from Schizosaccharomyces pombe (strain 972 / ATCC 24843) (Fission yeast).